The primary structure comprises 344 residues: MSVVLRHDWDRKELQALFDLPFPELLHRAASVHRAHFDPAQVQVSTLLSVKTGGCPEDCAYCPQAQRYDTGVSAQKLMETEEVVAKARQAKAAGASRFCMGAAWRSPKERDIPKVAAMIREVKAMGLETCATLGMLDAGQARALKDAGLDYYNHNLDTAPDYYDSIIHTRQYQDRLNTLEHVRDVGLKTCCGGIVGMGETREHRIGLLLALATLPAHPDSVPINQLVQVPGTPLHGTQQLDPFEFVRMIAVARIAMPKSMVRLSAGRETMSDELQALCFLAGANSIFYGEKLLTTGNPDTERDQALFQRLGLRPMQVTVDAAEHDHPGTVHAEITRSAACEHAA.

In terms of domain architecture, Radical SAM core spans 40 to 267; sequence AQVQVSTLLS…KSMVRLSAGR (228 aa). The [4Fe-4S] cluster site is built by Cys55, Cys59, and Cys62. [2Fe-2S] cluster contacts are provided by Cys99, Cys130, Cys190, and Arg262.

It belongs to the radical SAM superfamily. Biotin synthase family. As to quaternary structure, homodimer. Requires [4Fe-4S] cluster as cofactor. The cofactor is [2Fe-2S] cluster.

It carries out the reaction (4R,5S)-dethiobiotin + (sulfur carrier)-SH + 2 reduced [2Fe-2S]-[ferredoxin] + 2 S-adenosyl-L-methionine = (sulfur carrier)-H + biotin + 2 5'-deoxyadenosine + 2 L-methionine + 2 oxidized [2Fe-2S]-[ferredoxin]. The protein operates within cofactor biosynthesis; biotin biosynthesis; biotin from 7,8-diaminononanoate: step 2/2. Its function is as follows. Catalyzes the conversion of dethiobiotin (DTB) to biotin by the insertion of a sulfur atom into dethiobiotin via a radical-based mechanism. The chain is Biotin synthase from Xanthomonas axonopodis pv. citri (strain 306).